The sequence spans 235 residues: Regulator of G-protein signaling 18 (235 aa).

Ser49 is modified (phosphoserine). One can recognise an RGS domain in the interval 86–202 (SFDKLLSHRD…LKSDIYLDLM (117 aa)). 2 positions are modified to phosphoserine: Ser216 and Ser218.

Expressed in peripheral leukocytes, bone marrow, platelet, spleen and fetal liver.

The protein localises to the cytoplasm. In terms of biological role, inhibits signal transduction by increasing the GTPase activity of G protein alpha subunits thereby driving them into their inactive GDP-bound form. Binds to G(i) alpha-1, G(i) alpha-2, G(i) alpha-3 and G(q) alpha. This Homo sapiens (Human) protein is Regulator of G-protein signaling 18 (RGS18).